Consider the following 538-residue polypeptide: Hydroxylamine reductase (538 aa).

[4Fe-4S] cluster-binding residues include cysteine 3, cysteine 6, cysteine 15, and cysteine 21. Residues histidine 239, glutamate 263, cysteine 307, cysteine 394, cysteine 422, cysteine 447, glutamate 481, and lysine 483 each coordinate hybrid [4Fe-2O-2S] cluster. Cysteine persulfide is present on cysteine 394.

Belongs to the HCP family. The cofactor is [4Fe-4S] cluster. Requires hybrid [4Fe-2O-2S] cluster as cofactor.

Its subcellular location is the cytoplasm. The catalysed reaction is A + NH4(+) + H2O = hydroxylamine + AH2 + H(+). In terms of biological role, catalyzes the reduction of hydroxylamine to form NH(3) and H(2)O. The sequence is that of Hydroxylamine reductase from Solidesulfovibrio magneticus (strain ATCC 700980 / DSM 13731 / RS-1) (Desulfovibrio magneticus).